Reading from the N-terminus, the 1433-residue chain is DNA-directed RNA polymerase subunit beta' (1433 aa).

The Zn(2+) site is built by C66, C68, C81, and C84. Positions 474, 476, and 478 each coordinate Mg(2+). Positions 823, 897, 904, and 907 each coordinate Zn(2+).

It belongs to the RNA polymerase beta' chain family. As to quaternary structure, the RNAP catalytic core consists of 2 alpha, 1 beta, 1 beta' and 1 omega subunit. When a sigma factor is associated with the core the holoenzyme is formed, which can initiate transcription. Mg(2+) is required as a cofactor. The cofactor is Zn(2+).

The catalysed reaction is RNA(n) + a ribonucleoside 5'-triphosphate = RNA(n+1) + diphosphate. DNA-dependent RNA polymerase catalyzes the transcription of DNA into RNA using the four ribonucleoside triphosphates as substrates. This Amoebophilus asiaticus (strain 5a2) protein is DNA-directed RNA polymerase subunit beta'.